Consider the following 453-residue polypeptide: Putative F-box/FBD/LRR-repeat protein At1g66290 (453 aa).

A disordered region spans residues 1 to 28 (MDEDGERRVRTKRSCSPESSDNGSGDEV). Positions 14–23 (SCSPESSDNG) are enriched in polar residues. The F-box domain maps to 28-81 (VDWISDLPEALIVLVLLNLPTKDVIKTSVLSTKWRNIWRYVPRLDLDNRHFTEF). 5 LRR repeats span residues 155–179 (SLKL…VLVL), 210–235 (LDNV…SSKS), 246–269 (APKL…NLSS), 305–329 (LSRV…RCEP), and 358–381 (CSNL…IISE). The FBD domain occupies 373–423 (RKRTSIISEPRCLLSSLEYVKIEFALDKGKMELVRYLLENSPILKKLTLSL).

This is Putative F-box/FBD/LRR-repeat protein At1g66290 from Arabidopsis thaliana (Mouse-ear cress).